The primary structure comprises 330 residues: Ketol-acid reductoisomerase (NADP(+)) (330 aa).

Residues 2–182 (ARMYYDADAN…GGTRAGILET (181 aa)) form the KARI N-terminal Rossmann domain. NADP(+) contacts are provided by residues 25-28 (YGSQ), Ser51, Ser53, and 83-86 (DEFQ). His108 is a catalytic residue. Gly134 lines the NADP(+) pocket. The KARI C-terminal knotted domain occupies 183–328 (SFREETETDL…KDLRAMFSWL (146 aa)). The Mg(2+) site is built by Asp191, Glu195, Glu227, and Glu231. Ser252 lines the substrate pocket.

The protein belongs to the ketol-acid reductoisomerase family. Mg(2+) is required as a cofactor.

The enzyme catalyses (2R)-2,3-dihydroxy-3-methylbutanoate + NADP(+) = (2S)-2-acetolactate + NADPH + H(+). The catalysed reaction is (2R,3R)-2,3-dihydroxy-3-methylpentanoate + NADP(+) = (S)-2-ethyl-2-hydroxy-3-oxobutanoate + NADPH + H(+). It participates in amino-acid biosynthesis; L-isoleucine biosynthesis; L-isoleucine from 2-oxobutanoate: step 2/4. Its pathway is amino-acid biosynthesis; L-valine biosynthesis; L-valine from pyruvate: step 2/4. Involved in the biosynthesis of branched-chain amino acids (BCAA). Catalyzes an alkyl-migration followed by a ketol-acid reduction of (S)-2-acetolactate (S2AL) to yield (R)-2,3-dihydroxy-isovalerate. In the isomerase reaction, S2AL is rearranged via a Mg-dependent methyl migration to produce 3-hydroxy-3-methyl-2-ketobutyrate (HMKB). In the reductase reaction, this 2-ketoacid undergoes a metal-dependent reduction by NADPH to yield (R)-2,3-dihydroxy-isovalerate. This Synechococcus elongatus (strain ATCC 33912 / PCC 7942 / FACHB-805) (Anacystis nidulans R2) protein is Ketol-acid reductoisomerase (NADP(+)).